The following is a 128-amino-acid chain: Small ribosomal subunit protein bS6 (128 aa).

Positions 105–128 (AKVTEEEPVEAAPEAKVETTTEEE) are disordered. Positions 117 to 128 (PEAKVETTTEEE) are enriched in basic and acidic residues.

Belongs to the bacterial ribosomal protein bS6 family.

Binds together with bS18 to 16S ribosomal RNA. The polypeptide is Small ribosomal subunit protein bS6 (Geotalea daltonii (strain DSM 22248 / JCM 15807 / FRC-32) (Geobacter daltonii)).